We begin with the raw amino-acid sequence, 380 residues long: Transmembrane protein 229A (380 aa).

Residues 1 to 40 form a disordered region; sequence MAGSDVDSEGPARRGGAARRPGAPGGPGSEAAAGCPEPLS. 2 consecutive transmembrane segments (helical) span residues 51 to 71 and 117 to 137; these read LPAW…DVLV and AFVF…TLAG. The disordered stretch occupies residues 188–236; the sequence is RQQQQQQQQQQQQRRGALPVPPGARVPTAAGARRRRPRGPRGAGGAPSQ. Residues 190–202 show a composition bias toward low complexity; the sequence is QQQQQQQQQQQRR. Helical transmembrane passes span 244–264, 278–298, 310–330, and 343–363; these read FLFF…FFNV, LWSF…YFHL, VPIY…GLRT, and LNFM…LSVY.

Belongs to the TMEM229 family.

The protein resides in the membrane. In Homo sapiens (Human), this protein is Transmembrane protein 229A (TMEM229A).